A 269-amino-acid polypeptide reads, in one-letter code: Autophagy protein 5 (269 aa).

Lys-132 participates in a covalent cross-link: Glycyl lysine isopeptide (Lys-Gly) (interchain with G-Cter in ATG12).

The protein belongs to the ATG5 family. In terms of processing, conjugated to Atg12, which is essential for autophagy.

Its subcellular location is the cytoplasm. The protein resides in the preautophagosomal structure membrane. Its function is as follows. Involved in autophagic vesicle formation. Conjugation with Atg12, through a ubiquitin-like conjugating system involving Atg7 as an E1-like activating enzyme and Atg10 as an E2-like conjugating enzyme, is essential for its function. The Atg12-Atg5 conjugate acts as an E3-like enzyme which is required for lipidation of Atg8 and its association to the vesicle membranes. The sequence is that of Autophagy protein 5 (Atg5) from Drosophila melanogaster (Fruit fly).